Reading from the N-terminus, the 221-residue chain is Probable hydrogenase maturation factor HypB (221 aa).

A G-domain region spans residues 35 to 196 (AFDFMGAIGS…KRINPDAEVV (162 aa)). The Ni(2+) site is built by Cys-95 and His-96. Residues Cys-95, His-96, His-100, His-104, and Cys-127 each coordinate Zn(2+). Cys-127 lines the Ni(2+) pocket.

This sequence belongs to the SIMIBI class G3E GTPase family. HypB/HupM subfamily. As to quaternary structure, homodimer.

In terms of biological role, involved in the maturation of [NiFe] hydrogenases. Required for nickel insertion into the metal center of the hydrogenase. Exhibits a low intrinsic GTPase activity, which is essential for nickel insertion. The polypeptide is Probable hydrogenase maturation factor HypB (Methanocaldococcus jannaschii (strain ATCC 43067 / DSM 2661 / JAL-1 / JCM 10045 / NBRC 100440) (Methanococcus jannaschii)).